We begin with the raw amino-acid sequence, 281 residues long: Ras-related protein Rab-40C (281 aa).

GTP is bound by residues S23, G26, K27, and S46. Residues 41-49 form a switch-I region; sequence SPYAYSNGI. Mg(2+) contacts are provided by S46 and D69. Residues G72, N126, and R127 each coordinate GTP. The switch-II stretch occupies residues 72–88; it reads GQGRFCTIFRSYSRGAQ. The SOCS box domain occupies 175-228; that stretch reads LMRHGMEKIWRPNRVFSLQDLCCRAIVSCTPVHLIDKLPLPVTIKSHLKSFSMA. The interval 245-281 is disordered; the sequence is SGAGGSGSKGNSLKRSKSIRPPQSPPQNCSRSNCKIS. Residues 270–281 are compositionally biased toward polar residues; the sequence is PQNCSRSNCKIS. A lipid anchor (S-palmitoyl cysteine) is attached at C273. C278 carries S-geranylgeranyl cysteine lipidation.

This sequence belongs to the small GTPase superfamily. Rab family. As to quaternary structure, component of the cullin-5-RING E3 ubiquitin-protein ligase complex (ECS(RAB40C) complex) composed of CUL5, Elongin BC (ELOB and ELOC), RNF7/RBX2 and RAB40C. Interacts with protein phosphatase 6 (PP6) complex components ANKRD28, ANKRD52, PPP6C, PP6R1 and PP6R2; the interaction leads to ANKRD28 ubiquitination and decreased PP6 activity. Interacts with DAB2IP; DAB2IP acts as a GAP for RAB40C. It depends on Mg(2+) as a cofactor.

It localises to the cell membrane. The protein resides in the cytoplasm. The protein localises to the cytosol. Its subcellular location is the golgi apparatus membrane. The enzyme catalyses GTP + H2O = GDP + phosphate + H(+). The protein operates within protein modification; protein ubiquitination. With respect to regulation, regulated by guanine nucleotide exchange factors (GEFs) which promote the exchange of bound GDP for free GTP. Regulated by GTPase activating proteins (GAPs) including DAB2IP, which increase the GTP hydrolysis activity. Inhibited by GDP dissociation inhibitors (GDIs). Its function is as follows. RAB40C small GTPase acts as substrate-recognition component of the ECS(RAB40C) E3 ubiquitin ligase complex which mediates the ubiquitination and subsequent proteasomal degradation of target proteins. The Rab40 subfamily belongs to the Rab family that are key regulators of intracellular membrane trafficking, from the formation of transport vesicles to their fusion with membranes. Rabs cycle between an inactive GDP-bound form and an active GTP-bound form that is able to recruit to membranes different sets of downstream effectors directly responsible for vesicle formation, movement, tethering and fusion. As part of the ECS(RAB40C) complex, mediates ANKRD28 ubiquitination and degradation, thereby inhibiting protein phosphatase 6 (PP6) complex activity and focal adhesion assembly during cell migration. Also negatively regulate lipid droplets accumulation in a GTP-dependent manner. This Mus musculus (Mouse) protein is Ras-related protein Rab-40C.